The chain runs to 1415 residues: DNA-directed RNA polymerase subunit beta' (1415 aa).

Cys-70, Cys-72, Cys-85, and Cys-88 together coordinate Zn(2+). Positions 461, 463, and 465 each coordinate Mg(2+). Zn(2+) is bound by residues Cys-820, Cys-894, Cys-901, and Cys-904. Positions 1382-1415 (ERERAQAIADEEQSLFIEPPPVVQATTEGEGDNA) are disordered.

It belongs to the RNA polymerase beta' chain family. In terms of assembly, the RNAP catalytic core consists of 2 alpha, 1 beta, 1 beta' and 1 omega subunit. When a sigma factor is associated with the core the holoenzyme is formed, which can initiate transcription. It depends on Mg(2+) as a cofactor. Requires Zn(2+) as cofactor.

It carries out the reaction RNA(n) + a ribonucleoside 5'-triphosphate = RNA(n+1) + diphosphate. DNA-dependent RNA polymerase catalyzes the transcription of DNA into RNA using the four ribonucleoside triphosphates as substrates. The protein is DNA-directed RNA polymerase subunit beta' of Cupriavidus pinatubonensis (strain JMP 134 / LMG 1197) (Cupriavidus necator (strain JMP 134)).